Consider the following 442-residue polypeptide: Trigger factor (442 aa).

The PPIase FKBP-type domain maps to glycine 170–proline 250.

The protein belongs to the FKBP-type PPIase family. Tig subfamily.

The protein resides in the cytoplasm. The enzyme catalyses [protein]-peptidylproline (omega=180) = [protein]-peptidylproline (omega=0). Involved in protein export. Acts as a chaperone by maintaining the newly synthesized protein in an open conformation. Functions as a peptidyl-prolyl cis-trans isomerase. The polypeptide is Trigger factor (tig) (Treponema pallidum (strain Nichols)).